Here is a 143-residue protein sequence, read N- to C-terminus: 16 kDa calcium-binding protein (143 aa).

4 consecutive EF-hand domains span residues 2–37 (SEEKQWTEVFHAIDKDKNGFLTREEIAQCLKEVGVC), 41–71 (ADKIIKETDMNSDGKISLEEYLNALRKLPPR), 73–108 (KCVARWREVFQSIDKDGSGKVSIKELDEFLKTSGMD), and 109–143 (IDQNSLRNWMTQNDKNKDGELDYDEFLAYVRQTYK). 19 residues coordinate Ca(2+): D15, D17, N19, E26, D49, N51, D53, K55, E60, D86, D88, S90, K92, E97, D122, N124, D126, E128, and E133.

Found in eggs.

Functionally, calcium-binding protein. This Schistosoma mansoni (Blood fluke) protein is 16 kDa calcium-binding protein.